We begin with the raw amino-acid sequence, 377 residues long: Phospho-N-acetylmuramoyl-pentapeptide-transferase (377 aa).

Helical transmembrane passes span 9–29 (YITL…LVAG), 59–79 (TPTM…LLWA), 85–105 (FVWV…MDDY), 122–142 (FFWQ…AVSA), 155–175 (WVGS…VPFF), 178–198 (VSYP…IVGT), 210–230 (GLAI…AYVV), 247–267 (AAEL…FLWF), 274–294 (VFMG…IAVI), 299–319 (IVLF…MVQV), and 354–374 (QVVV…LSTL).

The protein belongs to the glycosyltransferase 4 family. MraY subfamily. Requires Mg(2+) as cofactor.

The protein localises to the cell inner membrane. The enzyme catalyses UDP-N-acetyl-alpha-D-muramoyl-L-alanyl-gamma-D-glutamyl-meso-2,6-diaminopimeloyl-D-alanyl-D-alanine + di-trans,octa-cis-undecaprenyl phosphate = di-trans,octa-cis-undecaprenyl diphospho-N-acetyl-alpha-D-muramoyl-L-alanyl-D-glutamyl-meso-2,6-diaminopimeloyl-D-alanyl-D-alanine + UMP. Its pathway is cell wall biogenesis; peptidoglycan biosynthesis. Its function is as follows. Catalyzes the initial step of the lipid cycle reactions in the biosynthesis of the cell wall peptidoglycan: transfers peptidoglycan precursor phospho-MurNAc-pentapeptide from UDP-MurNAc-pentapeptide onto the lipid carrier undecaprenyl phosphate, yielding undecaprenyl-pyrophosphoryl-MurNAc-pentapeptide, known as lipid I. The protein is Phospho-N-acetylmuramoyl-pentapeptide-transferase of Bordetella bronchiseptica (strain ATCC BAA-588 / NCTC 13252 / RB50) (Alcaligenes bronchisepticus).